The following is a 435-amino-acid chain: Glutamate-1-semialdehyde 2,1-aminomutase (435 aa).

The residue at position 266 (Lys-266) is an N6-(pyridoxal phosphate)lysine.

The protein belongs to the class-III pyridoxal-phosphate-dependent aminotransferase family. HemL subfamily. As to quaternary structure, homodimer. Pyridoxal 5'-phosphate is required as a cofactor.

It is found in the cytoplasm. It carries out the reaction (S)-4-amino-5-oxopentanoate = 5-aminolevulinate. It functions in the pathway porphyrin-containing compound metabolism; protoporphyrin-IX biosynthesis; 5-aminolevulinate from L-glutamyl-tRNA(Glu): step 2/2. The chain is Glutamate-1-semialdehyde 2,1-aminomutase from Coxiella burnetii (strain CbuG_Q212) (Coxiella burnetii (strain Q212)).